An 83-amino-acid polypeptide reads, in one-letter code: DNA-directed RNA polymerase subunit Rpo5 (83 aa).

Belongs to the archaeal Rpo5/eukaryotic RPB5 RNA polymerase subunit family. Part of the RNA polymerase complex.

It localises to the cytoplasm. It carries out the reaction RNA(n) + a ribonucleoside 5'-triphosphate = RNA(n+1) + diphosphate. DNA-dependent RNA polymerase (RNAP) catalyzes the transcription of DNA into RNA using the four ribonucleoside triphosphates as substrates. This Nitrosopumilus maritimus (strain SCM1) protein is DNA-directed RNA polymerase subunit Rpo5.